The chain runs to 316 residues: Cytochrome c biogenesis protein CcsA (316 aa).

7 helical membrane passes run 15–35, 44–64, 71–91, 142–162, 220–240, 247–267, and 281–301; these read FSIC…TTIL, GIIT…IYSG, LYES…VAYL, MILS…LLVI, VISL…VWAN, WSWD…AIYL, and AIVA…VNLL.

The protein belongs to the CcmF/CycK/Ccl1/NrfE/CcsA family. May interact with Ccs1.

Its subcellular location is the plastid. The protein resides in the chloroplast thylakoid membrane. In terms of biological role, required during biogenesis of c-type cytochromes (cytochrome c6 and cytochrome f) at the step of heme attachment. The chain is Cytochrome c biogenesis protein CcsA from Trachelium caeruleum (Blue throatwort).